Here is a 119-residue protein sequence, read N- to C-terminus: Immunoglobulin heavy variable 2-5 (119 aa).

The first 19 residues, 1–19 (MDTLCSTLLLLTIPSWVLS), serve as a signal peptide directing secretion. The residue at position 20 (Q20) is a Pyrrolidone carboxylic acid. The tract at residues 20 to 44 (QITLKESGPTLVKPTQTLTLTCTFS) is framework-1. An Ig-like domain is found at 20–119 (QITLKESGPT…DTATYYCAHR (100 aa)). Cysteines 41 and 116 form a disulfide. The interval 45 to 54 (GFSLSTSGVG) is complementarity-determining-1. A framework-2 region spans residues 55–71 (VGWIRQPPGKALEWLAL). Residues 72–78 (IYWDDDK) form a complementarity-determining-2 region. The framework-3 stretch occupies residues 79–116 (RYSPSLKSRLTITKDTSKNQVVLTMTNMDPVDTATYYC). The interval 117-119 (AHR) is complementarity-determining-3.

As to quaternary structure, immunoglobulins are composed of two identical heavy chains and two identical light chains; disulfide-linked.

It localises to the secreted. The protein resides in the cell membrane. Functionally, v region of the variable domain of immunoglobulin heavy chains that participates in the antigen recognition. Immunoglobulins, also known as antibodies, are membrane-bound or secreted glycoproteins produced by B lymphocytes. In the recognition phase of humoral immunity, the membrane-bound immunoglobulins serve as receptors which, upon binding of a specific antigen, trigger the clonal expansion and differentiation of B lymphocytes into immunoglobulins-secreting plasma cells. Secreted immunoglobulins mediate the effector phase of humoral immunity, which results in the elimination of bound antigens. The antigen binding site is formed by the variable domain of one heavy chain, together with that of its associated light chain. Thus, each immunoglobulin has two antigen binding sites with remarkable affinity for a particular antigen. The variable domains are assembled by a process called V-(D)-J rearrangement and can then be subjected to somatic hypermutations which, after exposure to antigen and selection, allow affinity maturation for a particular antigen. The sequence is that of Immunoglobulin heavy variable 2-5 from Homo sapiens (Human).